A 138-amino-acid polypeptide reads, in one-letter code: MAEVQQLRVQEAVDAMVKSVERENIRKMQGLMFRCSANCCEDNQASMQQVHQCIERCHAPLAQAQALVTSELERFQDRLARCTMHCNDKAKDSMDAGSKELQVKRQLDSCVAKCVDDHMHLIPTMTKKIKESLSSIGK.

Residue Ala2 is modified to N-acetylalanine. Phosphothreonine is present on residues Thr124 and Thr126.

It belongs to the FAM136 family.

The chain is Protein FAM136A (Fam136a) from Rattus norvegicus (Rat).